Consider the following 139-residue polypeptide: Ribulose bisphosphate carboxylase small subunit, chromosomal (139 aa).

The protein belongs to the RuBisCO small chain family. As to quaternary structure, heterohexadecamer of 8 large and 8 small subunits.

In terms of biological role, ruBisCO catalyzes two reactions: the carboxylation of D-ribulose 1,5-bisphosphate, the primary event in carbon dioxide fixation, as well as the oxidative fragmentation of the pentose substrate. Both reactions occur simultaneously and in competition at the same active site. Although the small subunit is not catalytic it is essential for maximal activity. The protein is Ribulose bisphosphate carboxylase small subunit, chromosomal of Cupriavidus necator (Alcaligenes eutrophus).